A 274-amino-acid polypeptide reads, in one-letter code: tRNA-cytidine(32) 2-sulfurtransferase (274 aa).

The PP-loop motif motif lies at 40–45 (SGGKDS). 3 residues coordinate [4Fe-4S] cluster: Cys115, Cys118, and Cys206.

It belongs to the TtcA family. Homodimer. Mg(2+) serves as cofactor. [4Fe-4S] cluster is required as a cofactor.

The protein localises to the cytoplasm. It carries out the reaction cytidine(32) in tRNA + S-sulfanyl-L-cysteinyl-[cysteine desulfurase] + AH2 + ATP = 2-thiocytidine(32) in tRNA + L-cysteinyl-[cysteine desulfurase] + A + AMP + diphosphate + H(+). It participates in tRNA modification. Its function is as follows. Catalyzes the ATP-dependent 2-thiolation of cytidine in position 32 of tRNA, to form 2-thiocytidine (s(2)C32). The sulfur atoms are provided by the cysteine/cysteine desulfurase (IscS) system. In Pseudomonas fluorescens (strain SBW25), this protein is tRNA-cytidine(32) 2-sulfurtransferase.